The primary structure comprises 432 residues: UDP-glucosyltransferase B1 (432 aa).

This sequence belongs to the UDP-glycosyltransferase family.

The catalysed reaction is (9Z)-17-hydroxyoctadec-9-enoate 17-O-beta-D-glucoside + UDP-alpha-D-glucose = (9Z)-17-hydroxyoctadec-9-enoate 17-O-sophoroside + UDP + H(+). Functionally, catalyzes the second glycosylation step of sophorolipid biosynthesis, the further glucosylation of the previoulsy formed glucolipid to give rise to an acidic sophorolipid. This is UDP-glucosyltransferase B1 from Starmerella bombicola (Yeast).